Consider the following 265-residue polypeptide: Shikimate dehydrogenase (NADP(+)) (265 aa).

Shikimate-binding positions include 15–17 (SLS) and T62. K66 serves as the catalytic Proton acceptor. Shikimate is bound by residues N87 and D102. Residues 125–129 (GAGGA), 149–154 (NRTLEK), and L209 contribute to the NADP(+) site. Y211 contacts shikimate. G233 is a binding site for NADP(+).

The protein belongs to the shikimate dehydrogenase family. Homodimer.

The catalysed reaction is shikimate + NADP(+) = 3-dehydroshikimate + NADPH + H(+). Its pathway is metabolic intermediate biosynthesis; chorismate biosynthesis; chorismate from D-erythrose 4-phosphate and phosphoenolpyruvate: step 4/7. Functionally, involved in the biosynthesis of the chorismate, which leads to the biosynthesis of aromatic amino acids. Catalyzes the reversible NADPH linked reduction of 3-dehydroshikimate (DHSA) to yield shikimate (SA). In Legionella pneumophila (strain Lens), this protein is Shikimate dehydrogenase (NADP(+)).